Consider the following 97-residue polypeptide: Osteocalcin (97 aa).

The signal sequence occupies residues 1 to 18 (MKTLAILVLCSLAAICLT). A propeptide spanning residues 19–52 (SSASAGAQPAGDSPVQGGLFMEKDQASAVVRQTR) is cleaved from the precursor. A Gla domain is found at 53–93 (AAKELTLAQTESLREVCETNMACDEMADAQGIVAAYQAFYG). Positions 63, 67, 70, and 76 each coordinate Ca(2+). 4-carboxyglutamate is present on residues Glu63, Glu67, and Glu70. A disulfide bridge connects residues Cys69 and Cys75. Glu77 carries the 4-carboxyglutamate modification.

It belongs to the osteocalcin/matrix Gla protein family. Post-translationally, gamma-carboxyglutamate residues are formed by vitamin K dependent carboxylation by GGCX. These residues are essential for the binding of calcium. In terms of tissue distribution, in the branchial arches, BGP is found outside the chondrocyte-containing zone. It is found in some cells in the basal zone of the branchial filaments, near the branchial arches, and within the extracellular matrix in the medial zone. In the vertebra, BGP is found in the mineralized bone matrix.

Its subcellular location is the secreted. Its function is as follows. The carboxylated form is one of the main organic components of the bone matrix, which constitutes 1-2% of the total bone protein. The carboxylated form binds strongly to apatite and calcium. This is Osteocalcin (bglap) from Argyrosomus regius (Meagre).